We begin with the raw amino-acid sequence, 439 residues long: Ribosomal protein uS12 methylthiotransferase RimO (439 aa).

The MTTase N-terminal domain occupies 2–114 (SKLYLMSLGC…IDEMILKKTN (113 aa)). [4Fe-4S] cluster is bound by residues C11, C45, C77, C146, C150, and C153. The 232-residue stretch at 132-363 (TGSNSHAFIK…VDEVIEKSFE (232 aa)) folds into the Radical SAM core domain.

It belongs to the methylthiotransferase family. RimO subfamily. The cofactor is [4Fe-4S] cluster.

It localises to the cytoplasm. It carries out the reaction L-aspartate(89)-[ribosomal protein uS12]-hydrogen + (sulfur carrier)-SH + AH2 + 2 S-adenosyl-L-methionine = 3-methylsulfanyl-L-aspartate(89)-[ribosomal protein uS12]-hydrogen + (sulfur carrier)-H + 5'-deoxyadenosine + L-methionine + A + S-adenosyl-L-homocysteine + 2 H(+). Its function is as follows. Catalyzes the methylthiolation of an aspartic acid residue of ribosomal protein uS12. The sequence is that of Ribosomal protein uS12 methylthiotransferase RimO from Campylobacter jejuni subsp. jejuni serotype O:23/36 (strain 81-176).